The sequence spans 118 residues: Ribonuclease P protein component (118 aa).

Belongs to the RnpA family. In terms of assembly, consists of a catalytic RNA component (M1 or rnpB) and a protein subunit.

It catalyses the reaction Endonucleolytic cleavage of RNA, removing 5'-extranucleotides from tRNA precursor.. RNaseP catalyzes the removal of the 5'-leader sequence from pre-tRNA to produce the mature 5'-terminus. It can also cleave other RNA substrates such as 4.5S RNA. The protein component plays an auxiliary but essential role in vivo by binding to the 5'-leader sequence and broadening the substrate specificity of the ribozyme. This Vibrio parahaemolyticus serotype O3:K6 (strain RIMD 2210633) protein is Ribonuclease P protein component.